Reading from the N-terminus, the 116-residue chain is Ribosome-binding factor A (116 aa).

Belongs to the RbfA family. Monomer. Binds 30S ribosomal subunits, but not 50S ribosomal subunits or 70S ribosomes.

It is found in the cytoplasm. Its function is as follows. One of several proteins that assist in the late maturation steps of the functional core of the 30S ribosomal subunit. Associates with free 30S ribosomal subunits (but not with 30S subunits that are part of 70S ribosomes or polysomes). Required for efficient processing of 16S rRNA. May interact with the 5'-terminal helix region of 16S rRNA. The chain is Ribosome-binding factor A from Enterococcus faecalis (strain ATCC 700802 / V583).